We begin with the raw amino-acid sequence, 448 residues long: tRNA(Ile)-lysidine synthase (448 aa).

29 to 34 (SGGVDS) serves as a coordination point for ATP.

The protein belongs to the tRNA(Ile)-lysidine synthase family.

It localises to the cytoplasm. The enzyme catalyses cytidine(34) in tRNA(Ile2) + L-lysine + ATP = lysidine(34) in tRNA(Ile2) + AMP + diphosphate + H(+). Functionally, ligates lysine onto the cytidine present at position 34 of the AUA codon-specific tRNA(Ile) that contains the anticodon CAU, in an ATP-dependent manner. Cytidine is converted to lysidine, thus changing the amino acid specificity of the tRNA from methionine to isoleucine. The protein is tRNA(Ile)-lysidine synthase of Azoarcus sp. (strain BH72).